Reading from the N-terminus, the 418-residue chain is Actin-related protein 3 (418 aa).

Ala2 is subject to N-acetylalanine.

It belongs to the actin family. ARP3 subfamily. In terms of assembly, component of the Arp2/3 complex composed of ACTR2/ARP2, ACTR3/ARP3, ARPC1B/p41-ARC, ARPC2/p34-ARC, ARPC3/p21-ARC, ARPC4/p20-ARC and ARPC5/p16-ARC. Detected in fibroblasts.

The protein localises to the cytoplasm. The protein resides in the cytoskeleton. Its subcellular location is the cell projection. It is found in the nucleus. In terms of biological role, ATP-binding component of the Arp2/3 complex, a multiprotein complex that mediates actin polymerization upon stimulation by nucleation-promoting factor (NPF). The Arp2/3 complex mediates the formation of branched actin networks in the cytoplasm, providing the force for cell motility. Seems to contact the pointed end of the daughter actin filament. In addition to its role in the cytoplasmic cytoskeleton, the Arp2/3 complex also promotes actin polymerization in the nucleus, thereby regulating gene transcription and repair of damaged DNA. The Arp2/3 complex promotes homologous recombination (HR) repair in response to DNA damage by promoting nuclear actin polymerization, leading to drive motility of double-strand breaks (DSBs). This is Actin-related protein 3 (ACTR3) from Gallus gallus (Chicken).